The following is a 188-amino-acid chain: Elongation factor P (188 aa).

This sequence belongs to the elongation factor P family.

Its subcellular location is the cytoplasm. It functions in the pathway protein biosynthesis; polypeptide chain elongation. Involved in peptide bond synthesis. Stimulates efficient translation and peptide-bond synthesis on native or reconstituted 70S ribosomes in vitro. Probably functions indirectly by altering the affinity of the ribosome for aminoacyl-tRNA, thus increasing their reactivity as acceptors for peptidyl transferase. The sequence is that of Elongation factor P from Rickettsia africae (strain ESF-5).